Reading from the N-terminus, the 634-residue chain is DNA-directed RNA polymerase subunit gamma (634 aa).

The Zn(2+) site is built by Cys74, Cys76, Cys89, and Cys92. Residues Asp471, Asp473, and Asp475 each coordinate Mg(2+).

The protein belongs to the RNA polymerase beta' chain family. RpoC1 subfamily. In terms of assembly, in cyanobacteria the RNAP catalytic core is composed of 2 alpha, 1 beta, 1 beta', 1 gamma and 1 omega subunit. When a sigma factor is associated with the core the holoenzyme is formed, which can initiate transcription. Mg(2+) is required as a cofactor. Zn(2+) serves as cofactor.

The catalysed reaction is RNA(n) + a ribonucleoside 5'-triphosphate = RNA(n+1) + diphosphate. In terms of biological role, DNA-dependent RNA polymerase catalyzes the transcription of DNA into RNA using the four ribonucleoside triphosphates as substrates. The chain is DNA-directed RNA polymerase subunit gamma from Synechococcus sp. (strain CC9605).